Here is a 487-residue protein sequence, read N- to C-terminus: Cysteine--tRNA ligase (487 aa).

Cysteine 30 lines the Zn(2+) pocket. The 'HIGH' region signature appears at 32–42 (PTVYGHAHLGH). 3 residues coordinate Zn(2+): cysteine 226, histidine 251, and glutamate 255. The 'KMSKS' region signature appears at 283-287 (KMGKS). Residue lysine 286 coordinates ATP.

It belongs to the class-I aminoacyl-tRNA synthetase family. Monomer. Zn(2+) serves as cofactor.

Its subcellular location is the cytoplasm. It carries out the reaction tRNA(Cys) + L-cysteine + ATP = L-cysteinyl-tRNA(Cys) + AMP + diphosphate. In Chlorobaculum tepidum (strain ATCC 49652 / DSM 12025 / NBRC 103806 / TLS) (Chlorobium tepidum), this protein is Cysteine--tRNA ligase (cysS).